The sequence spans 137 residues: Small ribosomal subunit protein bS6 (137 aa).

A disordered region spans residues Ser104 to Ala137. The segment covering Asn111–Ala137 has biased composition (basic and acidic residues).

It belongs to the bacterial ribosomal protein bS6 family.

Its function is as follows. Binds together with bS18 to 16S ribosomal RNA. The protein is Small ribosomal subunit protein bS6 of Helicobacter hepaticus (strain ATCC 51449 / 3B1).